A 347-amino-acid chain; its full sequence is Eukaryotic translation initiation factor 3 subunit I (347 aa).

WD repeat units lie at residues 8–47 (GHER…RLGT), 50–89 (DHSG…AVHS), 150–190 (EQAT…VQAK), 192–233 (IHEK…KTYK), and 289–328 (GHFG…FDFK).

It belongs to the eIF-3 subunit I family. In terms of assembly, component of the eukaryotic translation initiation factor 3 (eIF-3) complex.

It localises to the cytoplasm. In terms of biological role, component of the eukaryotic translation initiation factor 3 (eIF-3) complex, which is involved in protein synthesis of a specialized repertoire of mRNAs and, together with other initiation factors, stimulates binding of mRNA and methionyl-tRNAi to the 40S ribosome. The eIF-3 complex specifically targets and initiates translation of a subset of mRNAs involved in cell proliferation. This chain is Eukaryotic translation initiation factor 3 subunit I, found in Kluyveromyces lactis (strain ATCC 8585 / CBS 2359 / DSM 70799 / NBRC 1267 / NRRL Y-1140 / WM37) (Yeast).